The sequence spans 120 residues: Holo-[acyl-carrier-protein] synthase (120 aa).

Mg(2+) contacts are provided by D8 and E58.

The protein belongs to the P-Pant transferase superfamily. AcpS family. Mg(2+) serves as cofactor.

The protein resides in the cytoplasm. The enzyme catalyses apo-[ACP] + CoA = holo-[ACP] + adenosine 3',5'-bisphosphate + H(+). Its function is as follows. Transfers the 4'-phosphopantetheine moiety from coenzyme A to a Ser of acyl-carrier-protein. This Streptococcus pneumoniae (strain Hungary19A-6) protein is Holo-[acyl-carrier-protein] synthase.